Consider the following 325-residue polypeptide: tRNA(Ile)-lysidine synthase (325 aa).

Residue 34-39 (SGGADS) coordinates ATP.

It belongs to the tRNA(Ile)-lysidine synthase family.

It localises to the cytoplasm. It catalyses the reaction cytidine(34) in tRNA(Ile2) + L-lysine + ATP = lysidine(34) in tRNA(Ile2) + AMP + diphosphate + H(+). Its function is as follows. Ligates lysine onto the cytidine present at position 34 of the AUA codon-specific tRNA(Ile) that contains the anticodon CAU, in an ATP-dependent manner. Cytidine is converted to lysidine, thus changing the amino acid specificity of the tRNA from methionine to isoleucine. The chain is tRNA(Ile)-lysidine synthase from Rhodococcus opacus (strain B4).